Reading from the N-terminus, the 837-residue chain is Zinc fingers and homeoboxes protein 2 (837 aa).

Positions 1–41 are disordered; it reads MASKRKSTTPCMVRTSQVVEQDVPEEVDRAKEKGIGTPQPD. The interval 27-77 is interaction with EFNB1; the sequence is VDRAKEKGIGTPQPDVAKDCWAAELENSSKENEVIEVKSMGESQSKKLQGG. T37 is modified (phosphothreonine). Residue K64 forms a Glycyl lysine isopeptide (Lys-Gly) (interchain with G-Cter in SUMO2) linkage. C2H2-type zinc fingers lie at residues 78 to 101 and 110 to 133; these read YECK…DMQH and YVCA…SKFH. Residues 167-180 are compositionally biased toward low complexity; sequence TSGPGTGDSDSGIS. Residues 167 to 203 are disordered; it reads TSGPGTGDSDSGISVSKTPIMKPGKPKADAKKVPKKP. Residues 192 to 203 are compositionally biased toward basic and acidic residues; that stretch reads PKADAKKVPKKP. The segment at 195 to 358 is required for homodimerization; sequence DAKKVPKKPE…PAQLAPTKVT (164 aa). 4 consecutive DNA-binding regions (homeobox) follow at residues 263–324, 439–501, 530–591, and 628–690; these read NTTK…WSPE, TPAS…IVHI, PQKF…EQAV, and SPSP…TVKW. The required for repressor activity stretch occupies residues 263–446; the sequence is NTTKYNSALD…PLTPASDRKK (184 aa). The interval 263–497 is required for interaction with NFYA; it reads NTTKYNSALD…SDHRYRCQRG (235 aa). The required for nuclear localization stretch occupies residues 317 to 446; the sequence is HGISWSPEEV…PLTPASDRKK (130 aa). A disordered region spans residues 404 to 445; it reads GQKRPLVTPQAAPEPKRPHIAQVPEPPPKVANPPLTPASDRK. The segment covering 427 to 439 has biased composition (pro residues); that stretch reads PEPPPKVANPPLT. K455 is covalently cross-linked (Glycyl lysine isopeptide (Lys-Gly) (interchain with G-Cter in SUMO2)). The segment at 754–837 is disordered; sequence EPAKDCLPAK…DCVPAEAGQA (84 aa). Phosphoserine occurs at positions 825 and 827.

The protein belongs to the ZHX family. As to quaternary structure, homodimer (via homeobox domain 1). Heterodimer with ZHX1 (via homeobox domain 1). Heterodimer with ZHX3 (via homeobox domain 1). Heterodimerization with ZHX1 is not necessary for repressor activity. Interacts (via homeobox domain) with NFYA (via N-terminus). Interacts with EFNB1 intracellular domain peptide; the interaction enhances ZHX2 transcriptional repression activity.

The protein localises to the nucleus. Acts as a transcriptional repressor. Represses the promoter activity of the CDC25C gene stimulated by NFYA. May play a role in retinal development where it regulates the composition of bipolar cell populations, by promoting differentiation of bipolar OFF-type cells. In the brain, may promote maintenance and suppress differentiation of neural progenitor cells in the developing cortex. This Pongo abelii (Sumatran orangutan) protein is Zinc fingers and homeoboxes protein 2 (ZHX2).